Here is a 431-residue protein sequence, read N- to C-terminus: Nuclear envelope integral membrane protein 1 (431 aa).

The first 29 residues, 1–29, serve as a signal peptide directing secretion; the sequence is MAGEVEGEGCRVSWGVLVALLLLPLPSLC. Helical transmembrane passes span 151–171, 175–195, 206–226, 236–256, and 266–286; these read PRLF…DTLS, IFYY…ILVF, PFVA…QLVF, YWQY…AFCY, and SINI…YISV. The tract at residues 176-287 is a; required for its colocalization with lamins at the nuclear envelope; that stretch reads FYYSTGITVG…GLLLMYISVQ (112 aa). A Nuclear localization signal motif is present at residues 317 to 325; it reads RKIKLKRGK. The interval 326-395 is b; required for interaction with ran; sequence PSPPRLLTEE…LTPNEVSVHE (70 aa). Positions 326 to 431 are interaction with banf1-a and banf1-b; that stretch reads PSPPRLLTEE…IEPVLYQDLR (106 aa). Residues 368–375 are BAF-binding site (BBS); essential for interaction with banf1-a, banf1-b and ran; sequence SRIQSPKR.

Belongs to the NEMP family. In terms of assembly, homooligomer. Interacts with banf1-a and banf1-b. Interacts with ran-gtp. Phosphorylated.

The protein resides in the nucleus inner membrane. It is found in the nucleus envelope. Functionally, in concert with ran, required for proper eye development. May be involved in the expression of early eye marker genes. Contributes to nuclear envelope stiffness in germ cells. Required for fertility. Essential for normal erythropoiesis. Required for efficient nuclear envelope opening and enucleation during the late stages of erythroblast maturation. The polypeptide is Nuclear envelope integral membrane protein 1 (nemp1) (Xenopus tropicalis (Western clawed frog)).